Consider the following 816-residue polypeptide: Protein kinase C-binding protein NELL2 (816 aa).

An N-terminal signal peptide occupies residues Met-1 to Gly-21. 4 N-linked (GlcNAc...) asparagine glycosylation sites follow: Asn-53, Asn-225, Asn-293, and Asn-298. The 165-residue stretch at Pro-64–Cys-228 folds into the Laminin G-like domain. The 60-residue stretch at Arg-272–Lys-331 folds into the VWFC 1 domain. The 43-residue stretch at Gly-397 to Glu-439 folds into the EGF-like 1 domain. 3 cysteine pairs are disulfide-bonded: Cys-401–Cys-413, Cys-407–Cys-422, and Cys-424–Cys-438. Residues Asp-440, Ile-441, and Glu-443 each contribute to the Ca(2+) site. An EGF-like 2; calcium-binding domain is found at Asp-440 to Thr-481. 9 disulfides stabilise this stretch: Cys-444-Cys-457, Cys-451-Cys-466, Cys-468-Cys-480, Cys-486-Cys-499, Cys-493-Cys-508, Cys-510-Cys-521, Cys-525-Cys-535, Cys-529-Cys-541, and Cys-543-Cys-552. Asn-459, Thr-460, and Ser-463 together coordinate Ca(2+). The EGF-like 3; calcium-binding domain maps to Glu-482 to Lys-522. An N-linked (GlcNAc...) asparagine glycan is attached at Asn-517. The 31-residue stretch at Ala-523–Glu-553 folds into the EGF-like 4 domain. Thr-548 is a glycosylation site (O-linked (GlcNAc...) threonine). Positions 555, 556, and 558 each coordinate Ca(2+). Positions Asp-555–Glu-601 constitute an EGF-like 5; calcium-binding domain. 3 cysteine pairs are disulfide-bonded: Cys-559/Cys-572, Cys-566/Cys-581, and Cys-583/Cys-600. Residues Asn-574, Leu-575, and Trp-578 each coordinate Ca(2+). Ca(2+)-binding residues include Asp-602, Ile-603, and Glu-605. Residues Asp-602–Thr-637 form the EGF-like 6; calcium-binding domain. Disulfide bonds link Cys-606-Cys-619, Cys-613-Cys-628, and Cys-630-Cys-636. Asn-615 is a glycosylation site (N-linked (GlcNAc...) asparagine). Ca(2+) contacts are provided by Asn-621, Leu-622, and Gly-625. Residue Asn-635 is glycosylated (N-linked (GlcNAc...) asparagine). 2 VWFC domains span residues Gly-638–Asp-693 and Ser-698–Val-756.

As to quaternary structure, homotrimer. Binds to PRKCB. Interacts with NICOL1; this interaction triggers epididymal differentiation. Interacts (via the EGF domains) with ROBO3 (via Fibronectin type-III 1 domain) with a 3:3 stoichiometry; this interaction promotes oligomerization of ROBO3 resulting in the repulsion of commissural axons in the midline.

It localises to the secreted. Plays multiple roles in neural tissues, regulates neuronal proliferation, survival, differentiation, polarization, as well as axon guidance and synaptic functions. Plays an important role in axon development during neuronal differentiation through the MAPK intracellular signaling pathway. Via binding to its receptor ROBO3, plays a role in axon guidance, functioning as a repulsive axon guidance cue that contributes to commissural axon guidance to the midline. Required for neuron survival through the modulation of MAPK signaling pathways too. Involved in the regulation of hypothalamic GNRH secretion and the control of puberty. In terms of biological role, epididymal-secreted protein that signals through a ROS1-pathway to regulate the epididymal initial segment (IS) maturation, sperm maturation and male fertility. The protein is Protein kinase C-binding protein NELL2 of Homo sapiens (Human).